Consider the following 307-residue polypeptide: 2-methoxy-6-polyprenyl-1,4-benzoquinol methylase, mitochondrial (307 aa).

Residues 1 to 19 (MLISSRIVRSSLVNVPLRL) constitute a mitochondrion transit peptide. S-adenosyl-L-methionine-binding positions include Ser-122, Asp-148, 179–180 (NG), and Ser-197.

Belongs to the class I-like SAM-binding methyltransferase superfamily. MenG/UbiE family. As to quaternary structure, component of a multi-subunit COQ enzyme complex, composed of at least COQ3, COQ4, COQ5, COQ6, COQ7 and COQ9. Interacts with COQ3.

It is found in the mitochondrion inner membrane. It carries out the reaction 2-methoxy-6-(all-trans-hexaprenyl)benzene-1,4-diol + S-adenosyl-L-methionine = 5-methoxy-2-methyl-3-(all-trans-hexaprenyl)benzene-1,4-diol + S-adenosyl-L-homocysteine + H(+). The protein operates within cofactor biosynthesis; ubiquinone biosynthesis. Methyltransferase required for the conversion of 2-hexaprenyl-6-methoxy-1,4-benzoquinol (DDMQH2) to 2-hexaprenyl-3-methyl-6-methoxy-1,4-benzoquinol (DMQH2). The sequence is that of 2-methoxy-6-polyprenyl-1,4-benzoquinol methylase, mitochondrial from Saccharomyces cerevisiae (strain ATCC 204508 / S288c) (Baker's yeast).